The primary structure comprises 158 residues: GAF domain-containing protein A (158 aa).

The GAF domain occupies 32–158; that stretch reads NQIANLANVT…LTQILKLLDN (127 aa).

Belongs to the free Met sulfoxide reductase family.

This chain is GAF domain-containing protein A (gafA), found in Dictyostelium discoideum (Social amoeba).